The primary structure comprises 334 residues: Mediator of RNA polymerase II transcription subunit 4 (334 aa).

Residues 76-100 are a coiled coil; that stretch reads LIRTLKAHVEKRDEVIQQVENNLKA. Residues 188–203 are compositionally biased toward low complexity; sequence SSAQKPIIASPSASSS. Disordered regions lie at residues 188–234 and 252–334; these read SSAQ…GYGA and EKQW…GRNK. Composition is skewed to polar residues over residues 204 to 225 and 264 to 282; these read NGGT…TNGD and ATSS…SSPS.

Belongs to the Mediator complex subunit 4 family. Component of the Mediator complex.

The protein localises to the nucleus. In terms of biological role, component of the Mediator complex, a coactivator involved in the regulated transcription of nearly all RNA polymerase II-dependent genes. Mediator functions as a bridge to convey information from gene-specific regulatory proteins to the basal RNA polymerase II transcription machinery. Mediator is recruited to promoters by direct interactions with regulatory proteins and serves as a scaffold for the assembly of a functional preinitiation complex with RNA polymerase II and the general transcription factors. This is Mediator of RNA polymerase II transcription subunit 4 (mdt-4) from Caenorhabditis briggsae.